Consider the following 571-residue polypeptide: Proline--tRNA ligase (571 aa).

This sequence belongs to the class-II aminoacyl-tRNA synthetase family. ProS type 1 subfamily. Homodimer.

It is found in the cytoplasm. It catalyses the reaction tRNA(Pro) + L-proline + ATP = L-prolyl-tRNA(Pro) + AMP + diphosphate. Functionally, catalyzes the attachment of proline to tRNA(Pro) in a two-step reaction: proline is first activated by ATP to form Pro-AMP and then transferred to the acceptor end of tRNA(Pro). As ProRS can inadvertently accommodate and process non-cognate amino acids such as alanine and cysteine, to avoid such errors it has two additional distinct editing activities against alanine. One activity is designated as 'pretransfer' editing and involves the tRNA(Pro)-independent hydrolysis of activated Ala-AMP. The other activity is designated 'posttransfer' editing and involves deacylation of mischarged Ala-tRNA(Pro). The misacylated Cys-tRNA(Pro) is not edited by ProRS. The protein is Proline--tRNA ligase of Pseudomonas putida (strain W619).